Here is a 103-residue protein sequence, read N- to C-terminus: Early nodulin-12 (103 aa).

The signal sequence occupies residues 1–24 (MASFSLSILVFFFSALVLVPQGFA). Tandem repeats lie at residues 34–38 (PPQTK) and 39–43 (PPVNK). Positions 34–88 (PPQTKPPVNKPSHKEPPVNKPPHKEPPVHKPPHKDPPVNKPPQKESPVHKPPRKE) are 11 X 5 AA approximate tandem repeats of P-P-[QVHR]-[TNKH]-[KED]. The tract at residues 34–103 (PPQTKPPVNK…HPPAEDNIHF (70 aa)) is disordered. The 3; approximate repeat unit spans residues 44 to 48 (PSHKE). Residues 45 to 103 (SHKEPPVNKPPHKEPPVHKPPHKDPPVNKPPQKESPVHKPPRKESPTHRHPPAEDNIHF) are compositionally biased toward basic and acidic residues. Tandem repeats lie at residues 49–53 (PPVNK), 54–58 (PPHKE), 59–63 (PPVHK), 64–68 (PPHKD), 69–73 (PPVNK), and 74–78 (PPQKE). The stretch at 79 to 83 (SPVHK) is one 10; approximate repeat. The stretch at 84–88 (PPRKE) is repeat 11.

This sequence belongs to the plant proline-rich protein superfamily. ENOD12 family. In terms of tissue distribution, root nodules.

The protein localises to the secreted. The protein resides in the cell wall. In terms of biological role, involved in the infection process during the plant-rhizobium interaction. In Medicago truncatula (Barrel medic), this protein is Early nodulin-12 (ENOD12).